Consider the following 338-residue polypeptide: Ketol-acid reductoisomerase (NADP(+)) (338 aa).

The 181-residue stretch at 1 to 181 (MRVYYDKDCD…GGGRSGIIET (181 aa)) folds into the KARI N-terminal Rossmann domain. NADP(+) is bound by residues 24-27 (YGSQ), R47, S50, S52, and 82-85 (DENQ). H107 is an active-site residue. G133 is a binding site for NADP(+). The region spanning 182 to 327 (TFKDETETDL…EKLRGMMPWI (146 aa)) is the KARI C-terminal knotted domain. Mg(2+)-binding residues include D190, E194, E226, and E230. Position 251 (S251) interacts with substrate.

Belongs to the ketol-acid reductoisomerase family. Mg(2+) is required as a cofactor.

It carries out the reaction (2R)-2,3-dihydroxy-3-methylbutanoate + NADP(+) = (2S)-2-acetolactate + NADPH + H(+). The catalysed reaction is (2R,3R)-2,3-dihydroxy-3-methylpentanoate + NADP(+) = (S)-2-ethyl-2-hydroxy-3-oxobutanoate + NADPH + H(+). It functions in the pathway amino-acid biosynthesis; L-isoleucine biosynthesis; L-isoleucine from 2-oxobutanoate: step 2/4. It participates in amino-acid biosynthesis; L-valine biosynthesis; L-valine from pyruvate: step 2/4. In terms of biological role, involved in the biosynthesis of branched-chain amino acids (BCAA). Catalyzes an alkyl-migration followed by a ketol-acid reduction of (S)-2-acetolactate (S2AL) to yield (R)-2,3-dihydroxy-isovalerate. In the isomerase reaction, S2AL is rearranged via a Mg-dependent methyl migration to produce 3-hydroxy-3-methyl-2-ketobutyrate (HMKB). In the reductase reaction, this 2-ketoacid undergoes a metal-dependent reduction by NADPH to yield (R)-2,3-dihydroxy-isovalerate. This Chromohalobacter salexigens (strain ATCC BAA-138 / DSM 3043 / CIP 106854 / NCIMB 13768 / 1H11) protein is Ketol-acid reductoisomerase (NADP(+)).